Here is a 347-residue protein sequence, read N- to C-terminus: Protein RecA (347 aa).

Residue 65 to 72 (GPESSGKT) participates in ATP binding. The segment covering 327-336 (KFEPTELSRE) has biased composition (basic and acidic residues). The disordered stretch occupies residues 327-347 (KFEPTELSREEGDEDTLEDTM). Positions 337–347 (EGDEDTLEDTM) are enriched in acidic residues.

It belongs to the RecA family.

It is found in the cytoplasm. Its function is as follows. Can catalyze the hydrolysis of ATP in the presence of single-stranded DNA, the ATP-dependent uptake of single-stranded DNA by duplex DNA, and the ATP-dependent hybridization of homologous single-stranded DNAs. It interacts with LexA causing its activation and leading to its autocatalytic cleavage. This is Protein RecA from Xylella fastidiosa (strain 9a5c).